The following is a 620-amino-acid chain: 1-deoxy-D-xylulose-5-phosphate synthase (620 aa).

Thiamine diphosphate-binding positions include His80 and 121 to 123 (GHS). Mg(2+) is bound at residue Asp152. Thiamine diphosphate-binding positions include 153-154 (GA), Asn181, Tyr288, and Glu370. Mg(2+) is bound at residue Asn181.

Belongs to the transketolase family. DXPS subfamily. As to quaternary structure, homodimer. Requires Mg(2+) as cofactor. Thiamine diphosphate serves as cofactor.

It carries out the reaction D-glyceraldehyde 3-phosphate + pyruvate + H(+) = 1-deoxy-D-xylulose 5-phosphate + CO2. It functions in the pathway metabolic intermediate biosynthesis; 1-deoxy-D-xylulose 5-phosphate biosynthesis; 1-deoxy-D-xylulose 5-phosphate from D-glyceraldehyde 3-phosphate and pyruvate: step 1/1. Catalyzes the acyloin condensation reaction between C atoms 2 and 3 of pyruvate and glyceraldehyde 3-phosphate to yield 1-deoxy-D-xylulose-5-phosphate (DXP). This is 1-deoxy-D-xylulose-5-phosphate synthase from Salmonella heidelberg (strain SL476).